A 273-amino-acid chain; its full sequence is NLP effector protein 10 (273 aa).

Positions 1 to 21 (MKLPTFLIGFVALLVTSNGSA) are cleaved as a signal peptide. Residue asparagine 91 is glycosylated (N-linked (GlcNAc...) asparagine). A Conserved undecapeptide motif motif is present at residues 129–139 (AIMYAWYLPRA). A Conserved heptapeptide motif motif is present at residues 149–155 (GHRHYWL).

It belongs to the Necrosis inducing protein (NPP1) family.

Its subcellular location is the secreted. Functionally, secreted effector that acts as a pathogen-associated molecular pattern (PAMP) recognized by the plant immune system. Seems not to induce necrosis in Nicotiana benthamiana leaves but significantly improves disease resistance of Arabidopsis thaliana to Hyaloperonospora arabidopsidis and causes an inhibition of plant growth which is typically associated with enhanced immunity when over-expressed in Arabidopsis. The sequence is that of NLP effector protein 10 from Plasmopara viticola (Downy mildew of grapevine).